Consider the following 297-residue polypeptide: F-actin-capping protein subunit beta (297 aa).

A compositionally biased stretch (basic and acidic residues) spans 276–289; it reads DLSGKESDDKRQSE. Residues 276-297 are disordered; that stretch reads DLSGKESDDKRQSELVKGLQSL.

Belongs to the F-actin-capping protein beta subunit family. Component of the F-actin capping complex, composed of a heterodimer of an alpha and a beta subunit.

The protein resides in the cytoplasm. Its subcellular location is the cytoskeleton. The protein localises to the actin patch. Functionally, F-actin-capping proteins bind in a Ca(2+)-independent manner to the fast growing ends of actin filaments (barbed end) thereby blocking the exchange of subunits at these ends. Unlike other capping proteins (such as gelsolin and severin), these proteins do not sever actin filaments. This chain is F-actin-capping protein subunit beta (CAP2), found in Debaryomyces hansenii (strain ATCC 36239 / CBS 767 / BCRC 21394 / JCM 1990 / NBRC 0083 / IGC 2968) (Yeast).